The following is a 494-amino-acid chain: Cysteine--tRNA ligase (494 aa).

A Zn(2+)-binding site is contributed by Cys29. Residues 31-41 (VTVYDYCHLGH) carry the 'HIGH' region motif. Positions 216, 241, and 245 each coordinate Zn(2+). The 'KMSKS' region motif lies at 273–277 (KMSKS). Lys276 serves as a coordination point for ATP.

This sequence belongs to the class-I aminoacyl-tRNA synthetase family. As to quaternary structure, monomer. It depends on Zn(2+) as a cofactor.

It localises to the cytoplasm. It catalyses the reaction tRNA(Cys) + L-cysteine + ATP = L-cysteinyl-tRNA(Cys) + AMP + diphosphate. The polypeptide is Cysteine--tRNA ligase (Cyanothece sp. (strain PCC 7425 / ATCC 29141)).